Consider the following 188-residue polypeptide: MAFSVNYDSSFGGYSIHDYLGQWASTFGDVNHTNGNVTDANSGGFYGGSLSGSQYAISSTANQVTAFVAGGNLTYTLFNEPAHTLYGQLDSLSFGDGLSGGDTSPYSIQVPDVSFGGLNLSSLQAQGHDGVVHQVVYGLMSGDTGALETALNGILDDYGLSVNSTFDQVAAATAVGVQHADSPELLAA.

Heme-binding residues include H32 and Y75.

As to quaternary structure, monomer.

It is found in the secreted. Can bind free heme and also acquire it from hemoglobin. Conveys heme from hemoglobin to the HasR receptor which releases it into the bacterium. HasR alone can take up heme but the synergy between HasA and HasR increases heme uptake 100-fold. The polypeptide is Hemophore HasA (hasA) (Serratia marcescens).